We begin with the raw amino-acid sequence, 225 residues long: 7-cyano-7-deazaguanine synthase (225 aa).

10–20 lines the ATP pocket; it reads LSGGIDSATAA. Positions 191, 199, 202, and 205 each coordinate Zn(2+).

It belongs to the QueC family. Requires Zn(2+) as cofactor.

The catalysed reaction is 7-carboxy-7-deazaguanine + NH4(+) + ATP = 7-cyano-7-deazaguanine + ADP + phosphate + H2O + H(+). It participates in purine metabolism; 7-cyano-7-deazaguanine biosynthesis. Functionally, catalyzes the ATP-dependent conversion of 7-carboxy-7-deazaguanine (CDG) to 7-cyano-7-deazaguanine (preQ(0)). The chain is 7-cyano-7-deazaguanine synthase from Prochlorococcus marinus (strain NATL2A).